The chain runs to 488 residues: HSPB1-associated protein 1 (488 aa).

The tract at residues 88-208 (ETTCNYVEAT…EDTPFLYPTR (121 aa)) is interaction with HSPB1. Residues 124-288 (WAYADYKYFV…HLARVEEAIT (165 aa)) form the JmjC domain. The span at 369 to 379 (QTGSQNLTTGT) shows a compositional bias: polar residues. A disordered region spans residues 369–415 (QTGSQNLTTGTDKPEAASPFGPDLVPVAQRSEEPPSERGGIFGSDGK).

In terms of assembly, interacts with CRYAB and HSPB1. Widely expressed.

Its subcellular location is the cytoplasm. Functionally, may play a role in cellular stress response. The chain is HSPB1-associated protein 1 (HSPBAP1) from Homo sapiens (Human).